The primary structure comprises 334 residues: Pantothenate synthetase (334 aa).

34 to 41 (MGALHEGH) lines the ATP pocket. The active-site Proton donor is histidine 41. Glutamine 71 provides a ligand contact to (R)-pantoate. A beta-alanine-binding site is contributed by glutamine 71. Residue 158-161 (GQKD) coordinates ATP. Position 164 (glutamine 164) interacts with (R)-pantoate. Residues valine 187 and 195-198 (LSSR) contribute to the ATP site. A disordered region spans residues 288 to 334 (PLMLGTRGPAGEASPPNRERSEPGSAEQNKSPGEARTTPSGTSEASE). Residues 313–334 (AEQNKSPGEARTTPSGTSEASE) are compositionally biased toward polar residues.

It belongs to the pantothenate synthetase family. Homodimer.

It localises to the cytoplasm. The enzyme catalyses (R)-pantoate + beta-alanine + ATP = (R)-pantothenate + AMP + diphosphate + H(+). The protein operates within cofactor biosynthesis; (R)-pantothenate biosynthesis; (R)-pantothenate from (R)-pantoate and beta-alanine: step 1/1. Its function is as follows. Catalyzes the condensation of pantoate with beta-alanine in an ATP-dependent reaction via a pantoyl-adenylate intermediate. The chain is Pantothenate synthetase from Nocardioides sp. (strain ATCC BAA-499 / JS614).